A 99-amino-acid polypeptide reads, in one-letter code: Integration host factor subunit alpha (99 aa).

Residues 49 to 75 are disordered; the sequence is FGNFDLRDKNQRPGRNPKTGEDIPITA.

It belongs to the bacterial histone-like protein family. As to quaternary structure, heterodimer of an alpha and a beta chain.

In terms of biological role, this protein is one of the two subunits of integration host factor, a specific DNA-binding protein that functions in genetic recombination as well as in transcriptional and translational control. This chain is Integration host factor subunit alpha, found in Klebsiella pneumoniae (strain 342).